The primary structure comprises 108 residues: Ig kappa chain V-V region EPC 109 (108 aa).

Positions 1 to 23 (DVQMIQSPSSLSASLGDIVTMTC) are framework-1. An intrachain disulfide couples Cys23 to Cys88. Positions 24 to 34 (QASQGTNINLN) are complementarity-determining-1. A framework-2 region spans residues 35-49 (WFQQKPGKAPKLLIY). The segment at 50–56 (GASILEA) is complementarity-determining-2. The framework-3 stretch occupies residues 57–88 (GVPSRFSGRRYGTDFTLTISSLEDEDMATYFC). Residues 89–97 (LQHSYLPYT) form a complementarity-determining-3 region. A framework-4 region spans residues 98-108 (FGGGTKLEKKR).

This Mus musculus (Mouse) protein is Ig kappa chain V-V region EPC 109.